The sequence spans 54 residues: Zinc-containing ferredoxin A (54 aa).

A disordered region spans residues 1-21 (GIDPNYRTSRPEVGTHEGHKV). Residues 1-36 (GIDPNYRTSRPEVGTHEGHKVYGPVENPKVLGIHGA) are N-terminal extension. Positions 9 to 20 (SRPEVGTHEGHK) are enriched in basic and acidic residues. Zn(2+) contacts are provided by His16 and His19. Lys29 carries the post-translational modification N6-methyllysine. Residue His34 participates in Zn(2+) binding. The 20-residue stretch at 35–54 (GAIVGVDFDLCIADGSCINA) folds into the 4Fe-4S ferredoxin-type 1 domain. Cys45 and Cys51 together coordinate [3Fe-4S] cluster.

It depends on [3Fe-4S] cluster as a cofactor. The cofactor is [4Fe-4S] cluster. Requires Zn(2+) as cofactor.

Functionally, ferredoxins are iron-sulfur proteins that transfer electrons in a wide variety of metabolic reactions. This Sulfuracidifex metallicus (Sulfolobus metallicus) protein is Zinc-containing ferredoxin A (zfx).